The following is a 712-amino-acid chain: Amine oxidase [copper-containing] gamma 1 (712 aa).

The first 24 residues, 1-24, serve as a signal peptide directing secretion; it reads MAEPSFARLFLLFFSFLLIFATYS. N-linked (GlcNAc...) asparagine glycans are attached at residues N146 and N173. C188 and C210 form a disulfide bridge. Position 352-363 (352-363) interacts with substrate; the sequence is YMDAGELGLGPT. The Proton acceptor role is filled by D354. The cysteines at positions 373 and 399 are disulfide-linked. 439–444 contributes to the substrate binding site; sequence VGNYDY. The active-site Schiff-base intermediate with substrate; via topaquinone is Y442. Position 442 is a 2',4',5'-topaquinone (Y442). Cu cation contacts are provided by H499 and H501. 3 residues coordinate Mn(2+): D508, M509, and D510. 2 N-linked (GlcNAc...) asparagine glycosylation sites follow: N516 and N617. Positions 651 and 652 each coordinate Mn(2+). H662 provides a ligand contact to Cu cation.

Belongs to the copper/topaquinone oxidase family. Homodimer. Cu cation serves as cofactor. The cofactor is Zn(2+). It depends on L-topaquinone as a cofactor. Requires Mn(2+) as cofactor. Post-translationally, topaquinone (TPQ) is generated by copper-dependent autoxidation of a specific tyrosyl residue. In terms of tissue distribution, mostly expressed in roots, stems and flowers, and, at lower levels, in leaves and cotyledons.

The protein resides in the secreted. It localises to the extracellular space. The protein localises to the apoplast. It carries out the reaction a primary methyl amine + O2 + H2O = an aldehyde + H2O2 + NH4(+). It functions in the pathway amine and polyamine degradation; putrescine degradation. Copper amine oxidase that can use putrescine and spermidine as substrates. Required for abscisic acid- (ABA) and polyamine- (PA) and H(2)O(2)-dependent induced nitric oxide (NO) biosynthesis. Involved in ABA signal transduction and in responses to osmotic stress. The sequence is that of Amine oxidase [copper-containing] gamma 1 from Arabidopsis thaliana (Mouse-ear cress).